Reading from the N-terminus, the 365-residue chain is Aminomethyltransferase (365 aa).

It belongs to the GcvT family. As to quaternary structure, the glycine cleavage system is composed of four proteins: P, T, L and H.

It catalyses the reaction N(6)-[(R)-S(8)-aminomethyldihydrolipoyl]-L-lysyl-[protein] + (6S)-5,6,7,8-tetrahydrofolate = N(6)-[(R)-dihydrolipoyl]-L-lysyl-[protein] + (6R)-5,10-methylene-5,6,7,8-tetrahydrofolate + NH4(+). In terms of biological role, the glycine cleavage system catalyzes the degradation of glycine. The protein is Aminomethyltransferase of Aeromonas salmonicida (strain A449).